The chain runs to 343 residues: N-acetyl-gamma-glutamyl-phosphate reductase (343 aa).

Residue C149 is part of the active site.

It belongs to the NAGSA dehydrogenase family. Type 1 subfamily.

Its subcellular location is the cytoplasm. It carries out the reaction N-acetyl-L-glutamate 5-semialdehyde + phosphate + NADP(+) = N-acetyl-L-glutamyl 5-phosphate + NADPH + H(+). It participates in amino-acid biosynthesis; L-arginine biosynthesis; N(2)-acetyl-L-ornithine from L-glutamate: step 3/4. Its function is as follows. Catalyzes the NADPH-dependent reduction of N-acetyl-5-glutamyl phosphate to yield N-acetyl-L-glutamate 5-semialdehyde. The protein is N-acetyl-gamma-glutamyl-phosphate reductase of Methanococcus maripaludis (strain C5 / ATCC BAA-1333).